The chain runs to 427 residues: UPF0229 protein bll6755 (427 aa).

A disordered region spans residues 86-107; that stretch reads DYLQRSGQGSAKDSGPGEGDSE.

Belongs to the UPF0229 family.

This Bradyrhizobium diazoefficiens (strain JCM 10833 / BCRC 13528 / IAM 13628 / NBRC 14792 / USDA 110) protein is UPF0229 protein bll6755.